The primary structure comprises 1255 residues: Pre-mRNA-splicing factor ATP-dependent RNA helicase DEAH7 (1255 aa).

The tract at residues 1–316 (MGVDPFKTTE…SDEDRSQGAE (316 aa)) is disordered. Residues 13-60 (EADKETNGGVPVKDKLTFKAPERKSRLGLDARAIEKKDNAKTEGEFKV) are compositionally biased toward basic and acidic residues. The segment covering 109–137 (AQESTVTTENAGTSDISITPRTLSCTSSY) has biased composition (polar residues). 2 short sequence motifs (nuclear localization signal) span residues 144–153 (RHREEHRRDR) and 172–191 (RRRESYRQSDRDYHGEKRRR). The segment covering 144–219 (RHREEHRRDR…EWERSPHGDR (76 aa)) has biased composition (basic and acidic residues). Low complexity-rich tracts occupy residues 220-240 (GSSYSRRPQPSPSPMLAAASP) and 271-290 (PIRASGSSIRSSSSRYGGRS). Basic and acidic residues predominate over residues 297–316 (REGDLTNEGHSDEDRSQGAE). The region spanning 568–731 (LQVIRENQVI…FGSVPIFNIP (164 aa)) is the Helicase ATP-binding domain. ATP is bound at residue 581 to 588 (GETGSGKT). The DEAH box signature appears at 678–681 (DEAH). Residues 753–933 (AVKQAMTIHI…NVVLLLKSLK (181 aa)) enclose the Helicase C-terminal domain. Basic and acidic residues predominate over residues 1190–1224 (LEHKKKQKEEKSGMEEEMEKLRRDQVESELRSKER). The interval 1190–1255 (LEHKKKQKEE…TFLRPKKLGL (66 aa)) is disordered.

It belongs to the DEAD box helicase family. DEAH subfamily. PRP16 sub-subfamily. In terms of assembly, interacts with the Phytophthora PSR1 protein.

The protein resides in the nucleus. The catalysed reaction is ATP + H2O = ADP + phosphate + H(+). Involved in pre-mRNA splicing by mediating structural transitions of the spliceosome during the catalytic step. Facilitates expression of genes involved in auxin-mediated development including male-gametophyte transmission, apical-basal patterning of embryonic and gynoecium development, stamen development, phyllotactic flower positioning, and vascular development. Also involved in root-meristem maintenance and planar polarity of root-hair positioning. Acts as a component of RNA silencing that regulates distinct classes of endogenous small RNAs. Functions as a positive regulator of plant immunity. The protein is Pre-mRNA-splicing factor ATP-dependent RNA helicase DEAH7 of Arabidopsis thaliana (Mouse-ear cress).